The following is a 294-amino-acid chain: Pyridoxal 5'-phosphate synthase subunit PdxS (294 aa).

Asp24 is a binding site for D-ribose 5-phosphate. Lys81 acts as the Schiff-base intermediate with D-ribose 5-phosphate in catalysis. Gly153 provides a ligand contact to D-ribose 5-phosphate. Arg165 contributes to the D-glyceraldehyde 3-phosphate binding site. D-ribose 5-phosphate contacts are provided by residues Gly214 and 235–236 (GS).

It belongs to the PdxS/SNZ family. In terms of assembly, in the presence of PdxT, forms a dodecamer of heterodimers.

The catalysed reaction is aldehydo-D-ribose 5-phosphate + D-glyceraldehyde 3-phosphate + L-glutamine = pyridoxal 5'-phosphate + L-glutamate + phosphate + 3 H2O + H(+). The protein operates within cofactor biosynthesis; pyridoxal 5'-phosphate biosynthesis. Its function is as follows. Catalyzes the formation of pyridoxal 5'-phosphate from ribose 5-phosphate (RBP), glyceraldehyde 3-phosphate (G3P) and ammonia. The ammonia is provided by the PdxT subunit. Can also use ribulose 5-phosphate and dihydroxyacetone phosphate as substrates, resulting from enzyme-catalyzed isomerization of RBP and G3P, respectively. The chain is Pyridoxal 5'-phosphate synthase subunit PdxS from Geobacillus thermodenitrificans (strain NG80-2).